A 203-amino-acid polypeptide reads, in one-letter code: Glycerol-3-phosphate acyltransferase (203 aa).

The next 4 helical transmembrane spans lie at 6–26 (LTLLMIVAAYLAGSVSSAVLV), 82–102 (AISLGLIAIAACLGHIYPIFF), 118–138 (APIGDDLAICLMASWVVLVLI), and 141–161 (YSSLAAIITALLAPLYTWWLD).

Belongs to the PlsY family. In terms of assembly, probably interacts with PlsX.

The protein localises to the cell inner membrane. It catalyses the reaction an acyl phosphate + sn-glycerol 3-phosphate = a 1-acyl-sn-glycero-3-phosphate + phosphate. It functions in the pathway lipid metabolism; phospholipid metabolism. Its function is as follows. Catalyzes the transfer of an acyl group from acyl-phosphate (acyl-PO(4)) to glycerol-3-phosphate (G3P) to form lysophosphatidic acid (LPA). This enzyme utilizes acyl-phosphate as fatty acyl donor, but not acyl-CoA or acyl-ACP. The polypeptide is Glycerol-3-phosphate acyltransferase (Shewanella sp. (strain ANA-3)).